The sequence spans 231 residues: Flagellar L-ring protein (231 aa).

The N-terminal stretch at Met-1 to Gly-18 is a signal peptide. Cys-19 carries the N-palmitoyl cysteine lipid modification. The S-diacylglycerol cysteine moiety is linked to residue Cys-19.

The protein belongs to the FlgH family. In terms of assembly, the basal body constitutes a major portion of the flagellar organelle and consists of four rings (L,P,S, and M) mounted on a central rod.

It localises to the cell outer membrane. Its subcellular location is the bacterial flagellum basal body. Its function is as follows. Assembles around the rod to form the L-ring and probably protects the motor/basal body from shearing forces during rotation. The polypeptide is Flagellar L-ring protein (Pseudomonas fluorescens (strain ATCC BAA-477 / NRRL B-23932 / Pf-5)).